The chain runs to 386 residues: ADP,ATP carrier protein 1, mitochondrial (386 aa).

The transit peptide at 1–76 directs the protein to the mitochondrion; that stretch reads MDQVQHPSVM…PSTASAICVQ (76 aa). 3 Solcar repeats span residues 84-177, 189-281, and 289-375; these read SSFA…FKRL, KWFA…LKPV, and DSFF…LQLI. A run of 5 helical transmembrane segments spans residues 86-113, 154-178, 187-207, 257-278, and 292-312; these read FAID…VKLL, TANV…KRLF, YWKW…SSLL, FNIS…YDSL, and FASF…SYPI. 2 residues coordinate ADP: R159 and K171. R316 contributes to the ADP binding site. Residues 316–321 are important for transport activity; the sequence is RRRMMM. Residues 316 to 321 carry the Nucleotide carrier signature motif motif; the sequence is RRRMMM. A helical membrane pass occupies residues 352-372; the sequence is AGSNILRAIAGAGVLAGYDKL.

Belongs to the mitochondrial carrier (TC 2.A.29) family. As to quaternary structure, monomer.

It is found in the mitochondrion inner membrane. It carries out the reaction ADP(in) + ATP(out) = ADP(out) + ATP(in). Its activity is regulated as follows. The matrix-open state (m-state) is inhibited by the membrane-permeable bongkrekic acid (BKA). The cytoplasmic-open state (c-state) is inhibited by the membrane-impermeable toxic inhibitor carboxyatractyloside (CATR). Functionally, ADP:ATP antiporter that mediates import of ADP into the mitochondrial matrix for ATP synthesis, and export of ATP out to fuel the cell. Cycles between the cytoplasmic-open state (c-state) and the matrix-open state (m-state): operates by the alternating access mechanism with a single substrate-binding site intermittently exposed to either the cytosolic (c-state) or matrix (m-state) side of the inner mitochondrial membrane. This is ADP,ATP carrier protein 1, mitochondrial (ANT1) from Gossypium hirsutum (Upland cotton).